The chain runs to 704 residues: MFPHEEKLIREKLGREPNDLEKAMLEVMWSEHVSYKSSRKWLKLLPTKNEHVILGPGEDAGIIKFDDKTWIVIGIESHNHPSAVEPYGGAATGVGGIVRDILCMGARPIALLDPIRFGPLEKEKNRYLFEYVVKGIADYGNRIGVPTVGGETEFDESLDNYTLVNVACIGIMRPEHLVHSYVTEPGLKLVIVGNRTGRDGIHGVTFASEELGENAEEEDRSAVQIPDPFTEKLLIEATLEAVYTGKVKALKDLGGGGLTCAASEMVGKRGFGAIIYADKVPLREPGMTPLEVMISESQERMLFAIKPEDVEELGKIFEKYELEWSVVGEVIEEPKFIVYWKGRKVAELPIELLTNVPTIEWPMKEYRIEEDVETPQISLEEAFEKVWRSPNVISKRWVWEQYDHEVQGRTVIKPGFDSAVLKINEEYGLAITADGNPTHCYLNPYHGAMGVVVEVVRNLVSVGAKPLALVDNLNFASPERPEVYWSFVETIKGLADAAKAFGLAYVSGNVSFYNEVVNKPVKPTPVVAGVGKVKLEKIPRGPREGDLIGLIGETRKELGGSELYRVLGVSKGIAPRVDLEVEKRNAESVLKLIEEGLVSFVHDVSRGGVAVALAELSTWFNVGIKSEITTSLLPLDFAFSESHGRYIVTFPEENLEAVKKIAPITLLGRIGGEKFELKINGEKVSKTVKWLSDVHWNELYRIMD.

His32 is an active-site residue. Tyr35 serves as a coordination point for ATP. Residue Glu76 coordinates Mg(2+). Substrate is bound by residues 77–80 (SHNH) and Arg99. Catalysis depends on His78, which acts as the Proton acceptor. Asp100 is a Mg(2+) binding site. Residue Gln224 participates in substrate binding. Asp252 serves as a coordination point for Mg(2+). Residue 296–298 (ESQ) coordinates substrate. Residues Asp471 and Gly508 each contribute to the ATP site. Residue Asn509 coordinates Mg(2+). Ser511 provides a ligand contact to substrate.

Belongs to the FGAMS family. In terms of assembly, monomer. Part of the FGAM synthase complex composed of 1 PurL, 1 PurQ and 2 PurS subunits.

The protein resides in the cytoplasm. It carries out the reaction N(2)-formyl-N(1)-(5-phospho-beta-D-ribosyl)glycinamide + L-glutamine + ATP + H2O = 2-formamido-N(1)-(5-O-phospho-beta-D-ribosyl)acetamidine + L-glutamate + ADP + phosphate + H(+). It participates in purine metabolism; IMP biosynthesis via de novo pathway; 5-amino-1-(5-phospho-D-ribosyl)imidazole from N(2)-formyl-N(1)-(5-phospho-D-ribosyl)glycinamide: step 1/2. Part of the phosphoribosylformylglycinamidine synthase complex involved in the purines biosynthetic pathway. Catalyzes the ATP-dependent conversion of formylglycinamide ribonucleotide (FGAR) and glutamine to yield formylglycinamidine ribonucleotide (FGAM) and glutamate. The FGAM synthase complex is composed of three subunits. PurQ produces an ammonia molecule by converting glutamine to glutamate. PurL transfers the ammonia molecule to FGAR to form FGAM in an ATP-dependent manner. PurS interacts with PurQ and PurL and is thought to assist in the transfer of the ammonia molecule from PurQ to PurL. The sequence is that of Phosphoribosylformylglycinamidine synthase subunit PurL from Pyrococcus furiosus (strain ATCC 43587 / DSM 3638 / JCM 8422 / Vc1).